The sequence spans 426 residues: Serine--tRNA ligase (426 aa).

233 to 235 serves as a coordination point for L-serine; sequence TAE. 264–266 provides a ligand contact to ATP; that stretch reads RSE. Glu-287 contacts L-serine. 351-354 serves as a coordination point for ATP; that stretch reads EISS. An L-serine-binding site is contributed by Ser-387.

The protein belongs to the class-II aminoacyl-tRNA synthetase family. Type-1 seryl-tRNA synthetase subfamily. As to quaternary structure, homodimer. The tRNA molecule binds across the dimer.

Its subcellular location is the cytoplasm. The catalysed reaction is tRNA(Ser) + L-serine + ATP = L-seryl-tRNA(Ser) + AMP + diphosphate + H(+). It carries out the reaction tRNA(Sec) + L-serine + ATP = L-seryl-tRNA(Sec) + AMP + diphosphate + H(+). It participates in aminoacyl-tRNA biosynthesis; selenocysteinyl-tRNA(Sec) biosynthesis; L-seryl-tRNA(Sec) from L-serine and tRNA(Sec): step 1/1. Catalyzes the attachment of serine to tRNA(Ser). Is also able to aminoacylate tRNA(Sec) with serine, to form the misacylated tRNA L-seryl-tRNA(Sec), which will be further converted into selenocysteinyl-tRNA(Sec). The protein is Serine--tRNA ligase of Stutzerimonas stutzeri (strain A1501) (Pseudomonas stutzeri).